A 275-amino-acid polypeptide reads, in one-letter code: Expansin-B6 (275 aa).

The first 25 residues, 1 to 25 (MAARMGSKVAAILAILSVLVVHGSC), serve as a signal peptide directing secretion. Residue Asn33 is glycosylated (N-linked (GlcNAc...) asparagine). Residues 64–170 (GGACGFKNVN…RRVPCNYPGL (107 aa)) form the Expansin-like EG45 domain. 3 disulfide bridges follow: Cys67–Cys95, Cys98–Cys165, and Cys103–Cys109. An Expansin-like CBD domain is found at 183–270 (VYFAVLVEYE…NWSPNSNYRS (88 aa)).

It belongs to the expansin family. Expansin B subfamily. Expressed in internodes.

The protein resides in the secreted. The protein localises to the cell wall. It is found in the membrane. Functionally, may cause loosening and extension of plant cell walls by disrupting non-covalent bonding between cellulose microfibrils and matrix glucans. No enzymatic activity has been found. May be required for rapid internodal elongation in deepwater rice during submergence. In Oryza sativa subsp. japonica (Rice), this protein is Expansin-B6 (EXPB6).